Consider the following 858-residue polypeptide: DNA mismatch repair protein MutS (858 aa).

611 to 618 is an ATP binding site; the sequence is GPNMGGKS.

This sequence belongs to the DNA mismatch repair MutS family.

Its function is as follows. This protein is involved in the repair of mismatches in DNA. It is possible that it carries out the mismatch recognition step. This protein has a weak ATPase activity. In Actinobacillus succinogenes (strain ATCC 55618 / DSM 22257 / CCUG 43843 / 130Z), this protein is DNA mismatch repair protein MutS.